The chain runs to 159 residues: Nanos homolog 3 (159 aa).

The interval 42–87 (QEMQSDADSDEQAAALLESPSGPIRSRDSPEQNTSPGGGKPKSSPA) is disordered. Residues 91–145 (FCSFCKHNGETEAVYTSHYLKNRDGDVMCPYLRQYKCPLCGATGAKAHTKRFCPM) form a Nanos-type zinc finger. Residues cysteine 92, cysteine 95, histidine 108, cysteine 119, cysteine 127, cysteine 130, histidine 138, and cysteine 143 each coordinate Zn(2+). 2 short sequence motifs (C2HC) span residues 92-119 (CSFCKHNGETEAVYTSHYLKNRDGDVMC) and 127-143 (CPLCGATGAKAHTKRFC). The interaction with mylpfa stretch occupies residues 92–159 (CSFCKHNGET…YCSVYAKSTW (68 aa)).

This sequence belongs to the nanos family. Interacts (via C-terminus) with myosin mylpfa/mylz2; the interaction negatively regulates mylpfa phosphorylation. As to expression, in the embryo, displays early ubiquitous expression before being restricted to primordial germ cells in a 3'-UTR-dependent manner. Expressed in early stage germ cells in larval and adult ovaries.

The protein localises to the cytoplasm. The protein resides in the perinuclear region. Functionally, RNA-binding protein which binds to RNA with no sequence specificity. Probably represses translation of specific mRNAs. Essential for the development of primordial germ cells (PGCs) by ensuring their proper migration and survival but is not required for PGC specification. Also required to maintain oocyte production in the adult ovary. Negatively regulates phosphorylation of myosin mylpfa/mylz2. In Danio rerio (Zebrafish), this protein is Nanos homolog 3.